The following is a 245-amino-acid chain: uncharacterized protein (245 aa).

This is an uncharacterized protein from Escherichia coli.